The primary structure comprises 129 residues: uncharacterized protein (129 aa).

Residues 86–96 are compositionally biased toward acidic residues; sequence NDGFSSDDEPE. The disordered stretch occupies residues 86-116; it reads NDGFSSDDEPEEHVILTEDNQGEPSETPQAT. The span at 103–116 shows a compositional bias: polar residues; it reads EDNQGEPSETPQAT.

The protein belongs to the asfivirus D129L family.

This is an uncharacterized protein from African swine fever virus (strain Badajoz 1971 Vero-adapted) (Ba71V).